The sequence spans 420 residues: POU domain, class 4, transcription factor 1 (420 aa).

A POU-IV box motif is present at residues 57 to 66 (RAEALAAVDI). 2 disordered regions span residues 94–117 (STVPLAHHHHHHHHHQALEPGDLL) and 132–200 (GGAG…XGHL). The span at 99 to 108 (AHHHHHHHHH) shows a compositional bias: basic residues. 2 stretches are compositionally biased toward gly residues: residues 132–165 (GGAGAAGGGGAPTRPRGAGGPGGGGGPGGGGPGV) and 172–184 (PGGGGGGPGGGLL). One can recognise a POU-specific domain in the interval 261–338 (DSDTDPRELE…ILQAWLEEAE (78 aa)). Residues 356-415 (KKRKRTSIAAPEKRSLEAYFAVQPRPSSEKIAAIAEKLDLKKNVVRVWFCNQRQKQKRMK) constitute a DNA-binding region (homeobox).

Belongs to the POU transcription factor family. Class-4 subfamily. As to quaternary structure, interacts (via N-terminus) with RIT2; the interaction controls POU4F1 transactivation activity on some neuronal target genes. Isoform 1 interacts with POU4F2; this interaction inhibits both POU4F1 DNA-binding and transcriptional activities. Isoform 1 interacts (C-terminus) with ESR1 (via DNA-binding domain); this interaction decreases the estrogen receptor ESR1 transcriptional activity in a DNA- and ligand 17-beta-estradiol-independent manner. Detected in brain, spinal cord and dorsal root ganglion. Isoform 2 is detected in brain, spinal cord, dorsal root ganglion and spleen.

The protein localises to the nucleus. Its subcellular location is the cytoplasm. In terms of biological role, multifunctional transcription factor with different regions mediating its different effects. Acts by binding (via its C-terminal domain) to sequences related to the consensus octamer motif 5'-ATGCAAAT-3' in the regulatory regions of its target genes. Regulates the expression of specific genes involved in differentiation and survival within a subset of neuronal lineages. It has been shown that activation of some of these genes requires its N-terminal domain, maybe through a neuronal-specific cofactor. Activates BCL2 expression and protects neuronal cells from apoptosis (via the N-terminal domain). Induces neuronal process outgrowth and the coordinate expression of genes encoding synaptic proteins. Exerts its major developmental effects in somatosensory neurons and in brainstem nuclei involved in motor control. Stimulates the binding affinity of the nuclear estrogene receptor ESR1 to DNA estrogen response element (ERE), and hence modulates ESR1-induced transcriptional activity. May positively regulate POU4F2 and POU4F3. Regulates dorsal root ganglion sensory neuron specification and axonal projection into the spinal cord. Plays a role in TNFSF11-mediated terminal osteoclast differentiation. Negatively regulates its own expression interacting directly with a highly conserved autoregulatory domain surrounding the transcription initiation site. Functionally, able to act as transcription factor, cannot regulate the expression of the same subset of genes than isoform 1. Does not have anitapoptotic effect on neuronal cells. The sequence is that of POU domain, class 4, transcription factor 1 (Pou4f1) from Rattus norvegicus (Rat).